A 408-amino-acid chain; its full sequence is Argininosuccinate synthase (408 aa).

ATP-binding positions include Ala11–Ser19 and Ala38. Residues Tyr91 and Ser96 each coordinate L-citrulline. Gly121 contributes to the ATP binding site. Residues Thr123, Asn127, and Asp128 each contribute to the L-aspartate site. Asn127 serves as a coordination point for L-citrulline. Residues Arg131, Ser182, Ser191, Glu267, and Tyr279 each coordinate L-citrulline.

This sequence belongs to the argininosuccinate synthase family. Type 1 subfamily. As to quaternary structure, homotetramer.

The protein resides in the cytoplasm. It carries out the reaction L-citrulline + L-aspartate + ATP = 2-(N(omega)-L-arginino)succinate + AMP + diphosphate + H(+). The protein operates within amino-acid biosynthesis; L-arginine biosynthesis; L-arginine from L-ornithine and carbamoyl phosphate: step 2/3. This is Argininosuccinate synthase from Azorhizobium caulinodans (strain ATCC 43989 / DSM 5975 / JCM 20966 / LMG 6465 / NBRC 14845 / NCIMB 13405 / ORS 571).